We begin with the raw amino-acid sequence, 77 residues long: Fungal protease inhibitor F (77 aa).

A signal peptide spans 1–22; the sequence is MASKNLFVLFFIFALFAANIAA. 4 cysteine pairs are disulfide-bonded: Cys-25–Cys-57, Cys-36–Cys-49, Cys-40–Cys-77, and Cys-59–Cys-71.

The protein belongs to the protease inhibitor I40 family. As to expression, hemolymph.

The protein localises to the secreted. In terms of biological role, highly specific for fungal protease and subtilisin. The protein is Fungal protease inhibitor F of Bombyx mori (Silk moth).